A 908-amino-acid polypeptide reads, in one-letter code: SH3 and PX domain-containing protein 2B (908 aa).

The PX domain occupies 5 to 129 (RSIVEVKVLD…QFFETRPEDL (125 aa)). A Phosphotyrosine modification is found at Y25. 2 consecutive SH3 domains span residues 152-211 (MVLE…GQDG) and 221-280 (EEEE…KNSG). S279 and S291 each carry phosphoserine. Disordered stretches follow at residues 280–300 (GEPL…ALDL) and 315–366 (ELLN…PPIP). Positions 315 to 337 (ELLNNQRDGRFEGRLVPDGDVKQ) are enriched in basic and acidic residues. Basic residues predominate over residues 338–347 (RSPKMRQRPP). Residues 368–427 (QVEEEYYTIAEFQTTIPDGISFQAGLKVEVIEKSLSGWWYIQMEDKEGWAPATFIDKYKK) enclose the SH3 3 domain. The tract at residues 455-832 (TENNTGPEAV…LGPRVTGKVG (378 aa)) is disordered. Basic and acidic residues-rich tracts occupy residues 486-499 (KDWK…RKAS), 516-546 (QEEK…KMEP), 569-584 (LARD…DKSK), 595-606 (CGHKVLAKEVKK), and 615-625 (SKAELSEEKVD). A phosphoserine mark is found at S499 and S528. Phosphotyrosine is present on Y661. Positions 671-684 (KSQEKALLDGESHH) are enriched in basic and acidic residues. Positions 754-764 (VVPPRRPPPPK) are enriched in pro residues. S840 carries the phosphoserine modification. One can recognise an SH3 4 domain in the interval 847–908 (PKDSLYVAVA…IPSNYLRKKP (62 aa)).

This sequence belongs to the SH3PXD2 family. Interacts with NOXO1. Interacts (via SH3 domains) with NOXA1; the interaction is direct. Interacts with ADAM15. Interacts with FASLG. Phosphorylated in SRC-transformed cells. As to expression, highly expressed in the stromal-vascular fraction of white adipose tissue with moderate expression in heart, skeletal muscle and the mature adipocyte fraction of white adipose tissue. Also expressed in brain, spleen, kidney and liver. Expressed in white and brown adipose tissues, eye, lung, heart, brain, spleen, stomach, liver and skeletal muscle (at protein level). Not expressed in kidney or bone marrow.

It is found in the cytoplasm. Its subcellular location is the cell projection. It localises to the podosome. Functionally, adapter protein involved in invadopodia and podosome formation and extracellular matrix degradation. Binds matrix metalloproteinases (ADAMs), NADPH oxidases (NOXs) and phosphoinositides. Acts as an organizer protein that allows NOX1- or NOX3-dependent reactive oxygen species (ROS) generation and ROS localization. Plays a role in mitotic clonal expansion during the immediate early stage of adipocyte differentiation. The sequence is that of SH3 and PX domain-containing protein 2B (Sh3pxd2b) from Mus musculus (Mouse).